The sequence spans 1072 residues: Carbamoyl phosphate synthase large chain (1072 aa).

A carboxyphosphate synthetic domain region spans residues 1–401; the sequence is MPKRLDINTI…SLLKAVRSLE (401 aa). ATP is bound by residues arginine 129, arginine 169, glycine 175, glycine 176, lysine 208, isoleucine 210, glutamate 215, glycine 241, valine 242, histidine 243, glutamine 284, and glutamate 298. The ATP-grasp 1 domain occupies 133–327; sequence RTLMQDLNEP…IAKLAAKIAV (195 aa). Glutamine 284, glutamate 298, and asparagine 300 together coordinate Mg(2+). Positions 284, 298, and 300 each coordinate Mn(2+). The interval 402-546 is oligomerization domain; that stretch reads LGIYHLELDH…YSTYAEENES (145 aa). Residues 547–929 form a carbamoyl phosphate synthetic domain region; the sequence is IVTDRKSVVV…ALYKGLVASG (383 aa). The ATP-grasp 2 domain maps to 671–861; sequence EAALTKLGIP…MANVATKVIL (191 aa). ATP is bound by residues arginine 707, arginine 746, glutamate 752, glycine 777, valine 778, histidine 779, serine 780, glutamine 820, and glutamate 832. Mg(2+) contacts are provided by glutamine 820, glutamate 832, and asparagine 834. Residues glutamine 820, glutamate 832, and asparagine 834 each contribute to the Mn(2+) site. Residues 930 to 1072 form the MGS-like domain; that stretch reads INIPTHGSVI…QTKRHEVVHA (143 aa). The tract at residues 930-1072 is allosteric domain; that stretch reads INIPTHGSVI…QTKRHEVVHA (143 aa).

It belongs to the CarB family. As to quaternary structure, composed of two chains; the small (or glutamine) chain promotes the hydrolysis of glutamine to ammonia, which is used by the large (or ammonia) chain to synthesize carbamoyl phosphate. Tetramer of heterodimers (alpha,beta)4. The cofactor is Mg(2+). It depends on Mn(2+) as a cofactor.

It catalyses the reaction hydrogencarbonate + L-glutamine + 2 ATP + H2O = carbamoyl phosphate + L-glutamate + 2 ADP + phosphate + 2 H(+). The catalysed reaction is hydrogencarbonate + NH4(+) + 2 ATP = carbamoyl phosphate + 2 ADP + phosphate + 2 H(+). The protein operates within amino-acid biosynthesis; L-arginine biosynthesis; carbamoyl phosphate from bicarbonate: step 1/1. Its pathway is pyrimidine metabolism; UMP biosynthesis via de novo pathway; (S)-dihydroorotate from bicarbonate: step 1/3. In terms of biological role, large subunit of the glutamine-dependent carbamoyl phosphate synthetase (CPSase). CPSase catalyzes the formation of carbamoyl phosphate from the ammonia moiety of glutamine, carbonate, and phosphate donated by ATP, constituting the first step of 2 biosynthetic pathways, one leading to arginine and/or urea and the other to pyrimidine nucleotides. The large subunit (synthetase) binds the substrates ammonia (free or transferred from glutamine from the small subunit), hydrogencarbonate and ATP and carries out an ATP-coupled ligase reaction, activating hydrogencarbonate by forming carboxy phosphate which reacts with ammonia to form carbamoyl phosphate. This is Carbamoyl phosphate synthase large chain from Bacillus cereus (strain ATCC 10987 / NRS 248).